The chain runs to 361 residues: 3,6-anhydro-alpha-L-galactonate cycloisomerase (361 aa).

The Proton acceptor role is filled by Lys166. Mg(2+) is bound by residues Asp195, Glu221, and Glu247. The active-site Proton donor/acceptor is the His297.

It belongs to the mandelate racemase/muconate lactonizing enzyme family. The cofactor is Mg(2+).

It carries out the reaction 3,6-anhydro-L-galactonate = 2-dehydro-3-deoxy-L-galactonate. In terms of biological role, involved in the degradation of 3,6-anhydro-L-galactose, which is the major monomeric sugar of red macroalgae. Catalyzes the isomerization of 3,6-anhydrogalactonate (AHGA) to 2-keto-3-deoxy-galactonate (KDGal). This is 3,6-anhydro-alpha-L-galactonate cycloisomerase from Streptomyces coelicolor (strain ATCC BAA-471 / A3(2) / M145).